A 144-amino-acid chain; its full sequence is MRLNTLSPAEGAKHAPKRVGRGIGSGLGKTAGRGHKGQNSRSGGGVRRGFEGGQMPLYRRLPKFGFTSRKAMITAEVRLSELALVEGDVIDLNTLKAANVVGIQMEFVKVILSGEVNRAVTLRGLRVTKGARAAIEAAGGKIEE.

Residues 1–52 (MRLNTLSPAEGAKHAPKRVGRGIGSGLGKTAGRGHKGQNSRSGGGVRRGFEG) form a disordered region. Gly residues predominate over residues 21–31 (RGIGSGLGKTA).

This sequence belongs to the universal ribosomal protein uL15 family. In terms of assembly, part of the 50S ribosomal subunit.

Functionally, binds to the 23S rRNA. This chain is Large ribosomal subunit protein uL15, found in Yersinia pseudotuberculosis serotype O:1b (strain IP 31758).